Reading from the N-terminus, the 308-residue chain is MEFNQHITVLLNETIELLNIKPDGIYVDCTFGRGGHSQLILKKLSKKGKLICLDQDQEAINFANNLFKNNTNVIVIKTNFKNLKSALSAHKIFYVDGFIFDLGLSSPQLDDPKRGFSYHKNAWLDMRMDQSQNLNAHYIVNNYSFAKLVSIFKRYGEIKYPKIIADAIVKERSIKEINTTLELVEIIKKYSPKKNLFEKKHPARLFFQAIRIEVNDELNILEKAFNDAISMLNPLGVVAIISFHSLEDKIVKKVFNNYAKIKLPKEVPINNYVNKYSLLNQKIMPSTQELNDNNRSRSSILRGLIRNY.

S-adenosyl-L-methionine is bound by residues 34 to 36 (GGH), D54, F80, D101, and Q108.

The protein belongs to the methyltransferase superfamily. RsmH family.

Its subcellular location is the cytoplasm. The catalysed reaction is cytidine(1402) in 16S rRNA + S-adenosyl-L-methionine = N(4)-methylcytidine(1402) in 16S rRNA + S-adenosyl-L-homocysteine + H(+). Specifically methylates the N4 position of cytidine in position 1402 (C1402) of 16S rRNA. The sequence is that of Ribosomal RNA small subunit methyltransferase H from Ureaplasma parvum serovar 3 (strain ATCC 27815 / 27 / NCTC 11736).